Consider the following 164-residue polypeptide: Crossover junction endodeoxyribonuclease RuvC (164 aa).

Catalysis depends on residues Asp7, Glu67, and Asp140. Asp7, Glu67, and Asp140 together coordinate Mg(2+).

Belongs to the RuvC family. Homodimer which binds Holliday junction (HJ) DNA. The HJ becomes 2-fold symmetrical on binding to RuvC with unstacked arms; it has a different conformation from HJ DNA in complex with RuvA. In the full resolvosome a probable DNA-RuvA(4)-RuvB(12)-RuvC(2) complex forms which resolves the HJ. Requires Mg(2+) as cofactor.

Its subcellular location is the cytoplasm. The enzyme catalyses Endonucleolytic cleavage at a junction such as a reciprocal single-stranded crossover between two homologous DNA duplexes (Holliday junction).. Functionally, the RuvA-RuvB-RuvC complex processes Holliday junction (HJ) DNA during genetic recombination and DNA repair. Endonuclease that resolves HJ intermediates. Cleaves cruciform DNA by making single-stranded nicks across the HJ at symmetrical positions within the homologous arms, yielding a 5'-phosphate and a 3'-hydroxyl group; requires a central core of homology in the junction. The consensus cleavage sequence is 5'-(A/T)TT(C/G)-3'. Cleavage occurs on the 3'-side of the TT dinucleotide at the point of strand exchange. HJ branch migration catalyzed by RuvA-RuvB allows RuvC to scan DNA until it finds its consensus sequence, where it cleaves and resolves the cruciform DNA. The sequence is that of Crossover junction endodeoxyribonuclease RuvC from Alkaliphilus metalliredigens (strain QYMF).